A 662-amino-acid chain; its full sequence is UvrABC system protein B (662 aa).

A Helicase ATP-binding domain is found at 25 to 412 (EGVRRGYRYQ…SEQVVEQLIR (388 aa)). 38-45 (GVTGSGKT) contacts ATP. Residues 91 to 114 (YYDYYQPEAYVPETDTYIEKDASI) carry the Beta-hairpin motif. Residues 429–595 (QVDDLIAEIR…TVVKGVRDVI (167 aa)) enclose the Helicase C-terminal domain. The 36-residue stretch at 620 to 655 (KSTIEQLEKEMRQAAIELQFEKAAKLRDMILELRKQ) folds into the UVR domain.

Belongs to the UvrB family. As to quaternary structure, forms a heterotetramer with UvrA during the search for lesions. Interacts with UvrC in an incision complex.

Its subcellular location is the cytoplasm. Its function is as follows. The UvrABC repair system catalyzes the recognition and processing of DNA lesions. A damage recognition complex composed of 2 UvrA and 2 UvrB subunits scans DNA for abnormalities. Upon binding of the UvrA(2)B(2) complex to a putative damaged site, the DNA wraps around one UvrB monomer. DNA wrap is dependent on ATP binding by UvrB and probably causes local melting of the DNA helix, facilitating insertion of UvrB beta-hairpin between the DNA strands. Then UvrB probes one DNA strand for the presence of a lesion. If a lesion is found the UvrA subunits dissociate and the UvrB-DNA preincision complex is formed. This complex is subsequently bound by UvrC and the second UvrB is released. If no lesion is found, the DNA wraps around the other UvrB subunit that will check the other stand for damage. The sequence is that of UvrABC system protein B from Caldanaerobacter subterraneus subsp. tengcongensis (strain DSM 15242 / JCM 11007 / NBRC 100824 / MB4) (Thermoanaerobacter tengcongensis).